The sequence spans 447 residues: DNA primase DnaG (447 aa).

Positions 200–274 (DSIIVVEGRA…DIDYVARAPE (75 aa)) constitute a Toprim domain. Positions 206, 248, and 250 each coordinate Mg(2+).

This sequence belongs to the archaeal DnaG primase family. Forms a ternary complex with MCM helicase and DNA. Component of the archaeal exosome complex. It depends on Mg(2+) as a cofactor.

It carries out the reaction ssDNA + n NTP = ssDNA/pppN(pN)n-1 hybrid + (n-1) diphosphate.. RNA polymerase that catalyzes the synthesis of short RNA molecules used as primers for DNA polymerase during DNA replication. Also part of the exosome, which is a complex involved in RNA degradation. Acts as a poly(A)-binding protein that enhances the interaction between heteromeric, adenine-rich transcripts and the exosome. This is DNA primase DnaG from Pyrococcus abyssi (strain GE5 / Orsay).